We begin with the raw amino-acid sequence, 813 residues long: G-type lectin S-receptor-like serine/threonine-protein kinase LECRK1 (813 aa).

Positions 1 to 19 are cleaved as a signal peptide; it reads MVALLLFPMLLQLLSPTCA. Topologically, residues 20-466 are extracellular; the sequence is QTQKNITLGS…NRKHWVLGSS (447 aa). The 128-residue stretch at 22-149 folds into the Bulb-type lectin domain; it reads QKNITLGSTL…DGTTKWQTFD (128 aa). N-linked (GlcNAc...) asparagine glycans are attached at residues Asn24, Asn57, Asn164, Asn168, Asn219, and Asn242. One can recognise an EGF-like; atypical domain in the interval 293-346; the sequence is PQNICHAIVSDVGSGVCGFNSYCTFDGTRNQIASCQCPPWYKFFDEQKKYKGCK. Cystine bridges form between Cys297–Cys315, Cys309–Cys327, Cys329–Cys345, Cys391–Cys413, and Cys395–Cys401. Residues 354 to 433 enclose the PAN domain; the sequence is CDLEEATALA…NMADYVQRTV (80 aa). Asn407 and Asn441 each carry an N-linked (GlcNAc...) asparagine glycan. A helical membrane pass occupies residues 467–487; that stretch reads LILGTSILVNFALISIFLFGT. Over 488-813 the chain is Cytoplasmic; sequence YCRITTKKNI…DPCSFISSLP (326 aa). The Protein kinase domain maps to 523–797; that stretch reads AGFHEILGAG…KVTQMLDGAV (275 aa). ATP contacts are provided by residues 529–537 and Lys553; that span reads LGAGASGVV. Asp647 acts as the Proton acceptor in catalysis.

This sequence belongs to the protein kinase superfamily. Ser/Thr protein kinase family. Interacts (via kinase domain) with ADF4. In terms of tissue distribution, expressed in plumules, radicles and panicles.

The protein resides in the membrane. The catalysed reaction is L-seryl-[protein] + ATP = O-phospho-L-seryl-[protein] + ADP + H(+). It carries out the reaction L-threonyl-[protein] + ATP = O-phospho-L-threonyl-[protein] + ADP + H(+). Functionally, involved in innate immunity. Required for the expression of defense-related genes PR1A, LOX2 and CHS1 upon biotic stresses. Required for basal resistance to the fungal blast (M.grisea), bacterial blight (O.oryzae pv. oryzae, Xoo) and the herbivorous insect brown planthopper (N.lugens, BPH). May be involved in several defense signaling pathways. Involved in the promotion of seed germination. Required for the expression of alpha-amylase genes during seed germination. Involved in resistance against the brown planthopper (BPH). Member of the BPH3 (BPH resistance locus 3) cluster which contains LECRK1, LECRK2 and LECRK3. This is G-type lectin S-receptor-like serine/threonine-protein kinase LECRK1 from Oryza sativa subsp. indica (Rice).